A 75-amino-acid chain; its full sequence is Small ribosomal subunit protein bS18 (75 aa).

This sequence belongs to the bacterial ribosomal protein bS18 family. Part of the 30S ribosomal subunit. Forms a tight heterodimer with protein bS6.

Binds as a heterodimer with protein bS6 to the central domain of the 16S rRNA, where it helps stabilize the platform of the 30S subunit. The polypeptide is Small ribosomal subunit protein bS18 (Yersinia enterocolitica serotype O:8 / biotype 1B (strain NCTC 13174 / 8081)).